We begin with the raw amino-acid sequence, 270 residues long: ATP synthase subunit delta (270 aa).

Belongs to the ATPase delta chain family. As to quaternary structure, F-type ATPases have 2 components, F(1) - the catalytic core - and F(0) - the membrane proton channel. F(1) has five subunits: alpha(3), beta(3), gamma(1), delta(1), epsilon(1). F(0) has three main subunits: a(1), b(2) and c(10-14). The alpha and beta chains form an alternating ring which encloses part of the gamma chain. F(1) is attached to F(0) by a central stalk formed by the gamma and epsilon chains, while a peripheral stalk is formed by the delta and b chains.

The protein localises to the cell membrane. Functionally, f(1)F(0) ATP synthase produces ATP from ADP in the presence of a proton or sodium gradient. F-type ATPases consist of two structural domains, F(1) containing the extramembraneous catalytic core and F(0) containing the membrane proton channel, linked together by a central stalk and a peripheral stalk. During catalysis, ATP synthesis in the catalytic domain of F(1) is coupled via a rotary mechanism of the central stalk subunits to proton translocation. This protein is part of the stalk that links CF(0) to CF(1). It either transmits conformational changes from CF(0) to CF(1) or is implicated in proton conduction. In Kocuria rhizophila (strain ATCC 9341 / DSM 348 / NBRC 103217 / DC2201), this protein is ATP synthase subunit delta.